Here is a 167-residue protein sequence, read N- to C-terminus: Zinc finger CCCH domain-containing protein 3 (167 aa).

The C3H1-type zinc finger occupies 63 to 91 (AAAIGVCQHFVRTGTCKFGDSCRYFHPKP). Residues 89–101 (PKPPPANPGPAPS) are compositionally biased toward pro residues. The tract at residues 89 to 167 (PKPPPANPGP…YPPFPFVDWG (79 aa)) is disordered. The segment covering 108–120 (MAQQSNIQGSQPN) has biased composition (polar residues). Over residues 149–167 (SLRPPPEGGYPPFPFVDWG) the composition is skewed to pro residues.

The chain is Zinc finger CCCH domain-containing protein 3 from Oryza sativa subsp. japonica (Rice).